Here is a 313-residue protein sequence, read N- to C-terminus: Ribosomal RNA small subunit methyltransferase H (313 aa).

Residues 35-37, D55, F79, D101, and Q108 contribute to the S-adenosyl-L-methionine site; that span reads GGH.

It belongs to the methyltransferase superfamily. RsmH family.

It localises to the cytoplasm. The enzyme catalyses cytidine(1402) in 16S rRNA + S-adenosyl-L-methionine = N(4)-methylcytidine(1402) in 16S rRNA + S-adenosyl-L-homocysteine + H(+). Its function is as follows. Specifically methylates the N4 position of cytidine in position 1402 (C1402) of 16S rRNA. This is Ribosomal RNA small subunit methyltransferase H from Erwinia tasmaniensis (strain DSM 17950 / CFBP 7177 / CIP 109463 / NCPPB 4357 / Et1/99).